The following is a 93-amino-acid chain: Small ribosomal subunit protein uS19 (93 aa).

Belongs to the universal ribosomal protein uS19 family.

Functionally, protein S19 forms a complex with S13 that binds strongly to the 16S ribosomal RNA. In Mycolicibacterium paratuberculosis (strain ATCC BAA-968 / K-10) (Mycobacterium paratuberculosis), this protein is Small ribosomal subunit protein uS19.